A 196-amino-acid chain; its full sequence is Probable thymidylate kinase (196 aa).

An ATP-binding site is contributed by glycine 7–serine 14.

The protein belongs to the thymidylate kinase family.

It catalyses the reaction dTMP + ATP = dTDP + ADP. This Natronomonas pharaonis (strain ATCC 35678 / DSM 2160 / CIP 103997 / JCM 8858 / NBRC 14720 / NCIMB 2260 / Gabara) (Halobacterium pharaonis) protein is Probable thymidylate kinase.